A 378-amino-acid polypeptide reads, in one-letter code: O-methyltransferase dpfgI (378 aa).

S-adenosyl-L-methionine-binding positions include 232–233 (GG), D257, 279–280 (NF), and R295. The active-site Proton acceptor is H299.

The protein belongs to the class I-like SAM-binding methyltransferase superfamily. Cation-independent O-methyltransferase family.

The protein operates within secondary metabolite biosynthesis; terpenoid biosynthesis. Functionally, O-methyltransferase; part of the gene cluster that mediates the biosynthesis of diterpenoid pyrones. The first step of the pathway is the synthesis of the alpha-pyrone moiety by the polyketide synthase dpfgA via condensation of one acetyl-CoA starter unit with 3 malonyl-CoA units and 2 methylations. The alpha-pyrone is then combined with geranylgeranyl pyrophosphate (GGPP) formed by the GGPP synthase dpfgD through the action of the prenyltransferase dpfgC to yield a linear alpha-pyrone diterpenoid. Subsequent steps in the diterpenoid pyrone biosynthetic pathway involve the decalin core formation, which is initiated by the epoxidation of the C10-C11 olefin by the FAD-dependent oxidoreductase dpfgE, and is followed by a cyclization cascade catalyzed by the terpene cyclase dpfgB. The short chain dehydrogenase/reductase dpfgG then oxidizes the 8S hydroxy group to a ketone and the short chain dehydrogenase/reductase dpfgH reduces the ketone to the 8R hydroxy group to yield higginsianin B. Higginsianin B is further methylated by the methyltransferase dpfgI to produce the intermediate named FDDP B. The cytochrome P450 monooxygenase dfgpJ then catalyzes a three-step oxidation at C-27 to generate a carboxylic acid as well as C-26 hydroxylation. Finally, methyltransferase dpfgK methylates the carboxylic acid generated by dpfgJ, yielding the final diterpenoid pyrones from the pathway which were named FDDP D and FDDP E. This is O-methyltransferase dpfgI from Gibberella zeae (strain ATCC MYA-4620 / CBS 123657 / FGSC 9075 / NRRL 31084 / PH-1) (Wheat head blight fungus).